The following is an 87-amino-acid chain: Beta-toxin Ct1a (87 aa).

The N-terminal stretch at 1–19 (MNSLLMITACLALIGTVWA) is a signal peptide. An LCN-type CS-alpha/beta domain is found at 20-85 (KEGYLVNHST…VWPLPKKTCN (66 aa)). 4 disulfide bridges follow: Cys31/Cys84, Cys35/Cys60, Cys44/Cys65, and Cys48/Cys67. Asparagine amide is present on Asn85.

This sequence belongs to the long (4 C-C) scorpion toxin superfamily. Sodium channel inhibitor family. Beta subfamily. As to expression, expressed by the venom gland.

The protein resides in the secreted. In terms of biological role, beta toxins bind voltage-independently at site-4 of sodium channels (Nav) and shift the voltage of activation toward more negative potentials thereby affecting sodium channel activation and promoting spontaneous and repetitive firing. Is lethal to mice but does not show toxicity to freshwater shrimp and crickets. In Centruroides tecomanus (Scorpion), this protein is Beta-toxin Ct1a.